We begin with the raw amino-acid sequence, 314 residues long: Olfactory receptor 5P68 (314 aa).

Residues Met1–Val28 are Extracellular-facing. N-linked (GlcNAc...) asparagine glycosylation is present at Asn8. Residues Ile29–Ile49 traverse the membrane as a helical segment. At Leu50–Gln57 the chain is on the cytoplasmic side. A helical membrane pass occupies residues Leu58–Ser78. Residues Ser79–Ile102 are Extracellular-facing. An intrachain disulfide couples Cys100 to Cys192. A helical transmembrane segment spans residues Gln103–Tyr123. Residues Asp124–Ser136 lie on the Cytoplasmic side of the membrane. Residues Thr137–Leu157 form a helical membrane-spanning segment. Residues Asn158–Glu199 are Extracellular-facing. The chain crosses the membrane as a helical span at residues Val200–Ser220. Over Tyr221–Ala240 the chain is Cytoplasmic. The chain crosses the membrane as a helical span at residues Phe241 to Ile261. The Extracellular segment spans residues Tyr262 to Asn274. Residues Lys275 to Leu295 form a helical membrane-spanning segment. Residues Arg296 to Ser314 lie on the Cytoplasmic side of the membrane.

This sequence belongs to the G-protein coupled receptor 1 family.

Its subcellular location is the cell membrane. Its function is as follows. Potential odorant receptor. In Mus musculus (Mouse), this protein is Olfactory receptor 5P68.